The following is a 913-amino-acid chain: Eukaryotic translation initiation factor 3 subunit C (913 aa).

The tract at residues 1–22 (MSRFFANGSDSESESSEEEVQA) is disordered. Acidic residues predominate over residues 11–20 (SESESSEEEV). Ser-34, Ser-165, Ser-177, and Ser-186 each carry phosphoserine. The interval 157–285 (FREAPDQESD…KRAEDDEDGE (129 aa)) is disordered. Over residues 162–171 (DQESDVEEGE) the composition is skewed to acidic residues. Residues 172-184 (GEPHDSDGDRAGA) show a composition bias toward basic and acidic residues. The segment covering 214–239 (DEDDSDDSIDWDSDTESETESSEDEN) has biased composition (acidic residues). Positions 244-263 (MRERFLKRTTEKEDKDDDKR) are enriched in basic and acidic residues. Basic residues predominate over residues 264–276 (KDKRKEQKHKVRK). The 177-residue stretch at 645 to 821 (FHMHINLELL…ETVVMHRSEP (177 aa)) folds into the PCI domain. The disordered stretch occupies residues 856–913 (RGNMGNRDRGYNRNQNNQGGNWGGQRRDNRNQRNRNQRGHHKQQQQQQQQQVQTIEEE). Residues 887-898 (QRNRNQRGHHKQ) show a composition bias toward basic residues.

The protein belongs to the eIF-3 subunit C family. As to quaternary structure, component of the eukaryotic translation initiation factor 3 (eIF-3) complex. The eIF-3 complex interacts with pix.

Its subcellular location is the cytoplasm. In terms of biological role, component of the eukaryotic translation initiation factor 3 (eIF-3) complex, which is involved in protein synthesis of a specialized repertoire of mRNAs and, together with other initiation factors, stimulates binding of mRNA and methionyl-tRNAi to the 40S ribosome. The eIF-3 complex specifically targets and initiates translation of a subset of mRNAs involved in cell proliferation. This is Eukaryotic translation initiation factor 3 subunit C from Drosophila mojavensis (Fruit fly).